A 60-amino-acid chain; its full sequence is Protein translocase subunit SecE (60 aa).

Residues 1–31 (MFARLIRYFQEARAELARVTWPTREQVVEGT) lie on the Cytoplasmic side of the membrane. The chain crosses the membrane as a helical span at residues 32 to 52 (QAILLFTLAFMVILGLYDTVF). Topologically, residues 53-60 (RFLIGLLR) are extracellular.

It belongs to the SecE/SEC61-gamma family. As to quaternary structure, component of the Sec protein translocase complex. Heterotrimer consisting of SecY, SecE and SecG subunits. The heterotrimers can form oligomers, although 1 heterotrimer is thought to be able to translocate proteins. Interacts with SecDF, and other proteins may be involved. The channel interacts with SecA via subunit SecY.

The protein resides in the cell inner membrane. In terms of biological role, essential subunit of the protein translocation channel SecYEG. Clamps together the 2 halves of SecY. May contact the channel plug during translocation. The protein is Protein translocase subunit SecE of Thermus thermophilus (strain ATCC 27634 / DSM 579 / HB8).